The primary structure comprises 156 residues: ATP synthase subunit b (156 aa).

A helical transmembrane segment spans residues 5–27 (ITLIGQMITFAIFVGFTMKFVWP).

This sequence belongs to the ATPase B chain family. In terms of assembly, F-type ATPases have 2 components, F(1) - the catalytic core - and F(0) - the membrane proton channel. F(1) has five subunits: alpha(3), beta(3), gamma(1), delta(1), epsilon(1). F(0) has three main subunits: a(1), b(2) and c(10-14). The alpha and beta chains form an alternating ring which encloses part of the gamma chain. F(1) is attached to F(0) by a central stalk formed by the gamma and epsilon chains, while a peripheral stalk is formed by the delta and b chains.

Its subcellular location is the cell inner membrane. In terms of biological role, f(1)F(0) ATP synthase produces ATP from ADP in the presence of a proton or sodium gradient. F-type ATPases consist of two structural domains, F(1) containing the extramembraneous catalytic core and F(0) containing the membrane proton channel, linked together by a central stalk and a peripheral stalk. During catalysis, ATP synthesis in the catalytic domain of F(1) is coupled via a rotary mechanism of the central stalk subunits to proton translocation. Functionally, component of the F(0) channel, it forms part of the peripheral stalk, linking F(1) to F(0). The polypeptide is ATP synthase subunit b (Francisella philomiragia subsp. philomiragia (strain ATCC 25017 / CCUG 19701 / FSC 153 / O#319-036)).